Consider the following 839-residue polypeptide: Septin-interacting protein 1 (839 aa).

The interval 22–164 (INRPRGRQSR…ASERNVGAWE (143 aa)) is disordered. Residues Ser43 and Ser47 each carry the phosphoserine modification. Thr53 is subject to Phosphothreonine. Basic and acidic residues predominate over residues 88-101 (LQADDEKGSQKEGA). Residues 102-111 (EADQGEESDD) show a composition bias toward acidic residues. Positions 140–149 (SRKQPSTTFQ) are enriched in polar residues. A G-patch domain is found at 167–213 (TRGIGAKLLLQMGYEPGKGLGKDLQGISHPVQAHVRKGRGAIGAYGP). Residues 363-411 (IDNQERECSSQQAALESEHRKLEEIVQLERNHIRTLEESLERVERLIDN) adopt a coiled-coil conformation.

It belongs to the TFP11/STIP family. Identified in the spliceosome C complex. Interacts with pnut.

The protein resides in the nucleus. Functionally, may be involved in pre-mRNA splicing. The sequence is that of Septin-interacting protein 1 (sip1) from Drosophila melanogaster (Fruit fly).